Consider the following 230-residue polypeptide: Large ribosomal subunit protein uL1c (230 aa).

This sequence belongs to the universal ribosomal protein uL1 family. As to quaternary structure, part of the 50S ribosomal subunit.

It is found in the plastid. Its subcellular location is the chloroplast. Its function is as follows. Binds directly to 23S rRNA. Might be involved in E site tRNA release (Potential). The protein is Large ribosomal subunit protein uL1c (rpl1) of Trieres chinensis (Marine centric diatom).